A 382-amino-acid chain; its full sequence is MAQTFLFTSESVGEGHPDKICDQISDAILDACLKDDPFSKVACETASKTGMVMVFGEITTRSQIDYQKVIRNTIKSIGYDDSEKGFDYKTCNVLVAIEQQSPDIAQGLHYEKALEELGAGDQGIMFGYATDETPEKLPLTILLAHKLNAAMSVARRDGSLPWLRPDTKTQVTIEYEEENGAVIPRRVDTIVVSAQHADSISTEDLRSEILEKIIKPTVPAHLLDEKTVYHIQPSGRFVVGGPQGDAGLTGRKIIVDTYGGWGAHGGGAFSGKDYSKVDRSAAYAARWIAKSLVAAGLARRCLVQLSYAIGVAEPLSIFVNTYGTSSKTSAELVEIIRKNFDLRPGVLVKSLKLQTPFYLSTASYGHFTDQSKPWEQPKELKF.

Mg(2+) is bound at residue E10. An ATP-binding site is contributed by H16. E44 contributes to the K(+) binding site. L-methionine contacts are provided by E57 and Q100. ATP contacts are provided by residues 166–168 (DTK), 234–237 (SGRF), D245, 251–252 (RK), A268, K272, and K276. An L-methionine-binding site is contributed by D245. Position 276 (K276) interacts with L-methionine.

This sequence belongs to the AdoMet synthase family. Requires Mg(2+) as cofactor. K(+) serves as cofactor.

The enzyme catalyses L-methionine + ATP + H2O = S-adenosyl-L-methionine + phosphate + diphosphate. It participates in amino-acid biosynthesis; S-adenosyl-L-methionine biosynthesis; S-adenosyl-L-methionine from L-methionine: step 1/1. In terms of biological role, catalyzes the formation of S-adenosylmethionine from methionine and ATP. The reaction comprises two steps that are both catalyzed by the same enzyme: formation of S-adenosylmethionine (AdoMet) and triphosphate, and subsequent hydrolysis of the triphosphate. The chain is S-adenosylmethionine synthase (sam1) from Schizosaccharomyces pombe (strain 972 / ATCC 24843) (Fission yeast).